Consider the following 88-residue polypeptide: Small ribosomal subunit protein bS20 (88 aa).

A compositionally biased stretch (basic residues) spans 1–16 (MANTHSAKKATRKITR). Residues 1-20 (MANTHSAKKATRKITRRTAV) form a disordered region.

It belongs to the bacterial ribosomal protein bS20 family.

Binds directly to 16S ribosomal RNA. In Nitrobacter hamburgensis (strain DSM 10229 / NCIMB 13809 / X14), this protein is Small ribosomal subunit protein bS20.